Reading from the N-terminus, the 664-residue chain is Protein cueball (664 aa).

The N-terminal stretch at 1-21 (MRNLGIAVTFAVLLVIGYVTA) is a signal peptide. Residues 22-552 (LEWDAVVTTD…VTYCKNSFNR (531 aa)) are Extracellular-facing. Asparagine 40, asparagine 140, and asparagine 188 each carry an N-linked (GlcNAc...) asparagine glycan. LDL-receptor class B repeat units lie at residues 115 to 157 (RKLY…ENHD), 168 to 211 (RHLY…DHYN), and 212 to 257 (NRIY…NSQY). EGF-like domains follow at residues 367 to 399 (EIPI…FEGE), 402 to 438 (DRNI…ARCE), and 473 to 510 (EEYT…KRCE). 8 disulfides stabilise this stretch: cysteine 371–cysteine 380, cysteine 375–cysteine 390, cysteine 406–cysteine 416, cysteine 410–cysteine 426, cysteine 428–cysteine 437, cysteine 477–cysteine 487, cysteine 481–cysteine 498, and cysteine 500–cysteine 509. N-linked (GlcNAc...) asparagine glycosylation is present at asparagine 431. Asparagine 491 is a glycosylation site (N-linked (GlcNAc...) asparagine). Residue asparagine 551 is glycosylated (N-linked (GlcNAc...) asparagine). Residues 553–573 (TVVYVSLAFTASLVTLVTILC) form a helical membrane-spanning segment. Residues 574 to 664 (TVRRMYERNR…KLPSCVAEKN (91 aa)) lie on the Cytoplasmic side of the membrane.

The protein belongs to the cueball family.

It localises to the cell membrane. Functionally, has a role in spermatogenesis and oogenesis. In Aedes aegypti (Yellowfever mosquito), this protein is Protein cueball.